Consider the following 248-residue polypeptide: 5'-nucleotidase SurE (248 aa).

A divalent metal cation contacts are provided by Asp8, Asp9, Ser39, and Asn91.

This sequence belongs to the SurE nucleotidase family. A divalent metal cation serves as cofactor.

The protein localises to the cytoplasm. The catalysed reaction is a ribonucleoside 5'-phosphate + H2O = a ribonucleoside + phosphate. In terms of biological role, nucleotidase that shows phosphatase activity on nucleoside 5'-monophosphates. The sequence is that of 5'-nucleotidase SurE from Geobacter sp. (strain M21).